The following is a 5207-amino-acid chain: NBPF family member NBPF20 (5207 aa).

64 Olduvai domains span residues 5 to 77 (SREL…PSCP), 80 to 135 (SREL…LDVD), 136 to 228 (RTKK…RSKK), 229 to 321 (ERRR…PSCP), 324 to 379 (SREL…LDVD), 380 to 472 (RTKK…RSKK), 473 to 565 (ERRR…PSCP), 568 to 623 (SREL…LDVD), 624 to 716 (RTKK…RSKK), 717 to 809 (ERRR…PSCP), 812 to 867 (SREL…LDVD), 868 to 960 (RTKK…RSKK), 961 to 1053 (ERRR…PSCP), 1056 to 1111 (SREL…LDVD), 1112 to 1204 (RTKK…RSKK), 1205 to 1297 (ERRR…PSCP), 1300 to 1355 (SREL…LDVD), 1356 to 1448 (RTKK…RSKK), 1449 to 1541 (ERRR…PSCP), 1544 to 1599 (SREL…LDVD), 1600 to 1692 (RTKK…RSKK), 1693 to 1785 (ERRR…PSCP), 1788 to 1843 (SREL…LDVD), 1844 to 1936 (RTKK…RSKK), 1937 to 2029 (ERRR…PSCP), 2032 to 2087 (SREL…LDVD), 2088 to 2180 (RTKK…RSKK), 2181 to 2273 (ERRR…PSCP), 2276 to 2331 (SREL…LDVD), 2332 to 2424 (RTKK…RSKK), 2425 to 2517 (ERRR…PSCP), 2520 to 2575 (SREL…LDVD), 2576 to 2668 (RTKK…RSKK), 2669 to 2761 (ERRR…PSCP), 2764 to 2819 (SREL…LDVD), 2820 to 2912 (RTKK…RSKK), 2913 to 3005 (ERRR…PSCP), 3008 to 3063 (SREL…LDVD), 3064 to 3156 (RTKK…RSKK), 3157 to 3249 (ERRR…PSCP), 3252 to 3307 (SREL…LDVD), 3308 to 3400 (RTKK…RSKK), 3401 to 3493 (ERRR…PSCP), 3496 to 3551 (SREL…LDVD), 3552 to 3644 (RTKK…RSKK), 3645 to 3737 (ERRR…PSCP), 3740 to 3795 (SREL…LDVD), 3796 to 3888 (RTKK…RSKK), 3889 to 3981 (ERRR…PSCP), 3984 to 4039 (SREL…LDVD), 4040 to 4132 (RTKK…RSKK), 4133 to 4225 (ERRR…PSCP), 4228 to 4283 (SREL…LDVD), 4284 to 4376 (RTKK…RSKK), 4377 to 4452 (ERRR…LDVD), 4453 to 4545 (RTKK…RSKK), 4546 to 4621 (ERRR…LDVD), 4622 to 4713 (RTKK…PSCP), 4716 to 4771 (SREL…LDVD), 4772 to 4864 (RTKK…RSKK), 4865 to 4957 (ERRR…PSCP), 4960 to 5015 (SREL…LDVD), 5016 to 5108 (RTKK…RSKK), and 5109 to 5207 (KRRR…IFPQ). 2 disordered regions span residues 137-157 (TKKD…LSRE) and 215-256 (KGKG…LDEK). The segment covering 216 to 234 (GKGKKRRGRRSKKERRRGR) has biased composition (basic residues). 2 disordered regions span residues 381-403 (TKKD…RELL) and 459-513 (KGKG…DRSY). Over residues 460–478 (GKGKKRRGRRSKKERRRGR) the composition is skewed to basic residues. A compositionally biased stretch (basic and acidic residues) spans 492–502 (LSRELLDEKGP). Disordered regions lie at residues 625–647 (TKKD…RELL) and 703–744 (KGKG…LDEK). Over residues 704–722 (GKGKKRRGRRSKKERRRGR) the composition is skewed to basic residues. Disordered stretches follow at residues 869–891 (TKKD…RELL) and 947–1001 (KGKG…DRSY). Over residues 948-966 (GKGKKRRGRRSKKERRRGR) the composition is skewed to basic residues. Residues 980-990 (LSRELLDEKGP) show a composition bias toward basic and acidic residues. Disordered stretches follow at residues 1113–1135 (TKKD…RELL) and 1191–1245 (KGKG…DRSY). Residues 1192–1210 (GKGKKRRGRRSKKERRRGR) are compositionally biased toward basic residues. Over residues 1224-1234 (LSRELLDEKGP) the composition is skewed to basic and acidic residues. 2 disordered regions span residues 1357–1379 (TKKD…RELL) and 1435–1489 (KGKG…DRSY). A compositionally biased stretch (basic residues) spans 1436 to 1454 (GKGKKRRGRRSKKERRRGR). The span at 1468-1478 (LSRELLDEKGP) shows a compositional bias: basic and acidic residues. Disordered stretches follow at residues 1601–1623 (TKKD…RELL) and 1679–1733 (KGKG…DRSY). Residues 1680–1698 (GKGKKRRGRRSKKERRRGR) are compositionally biased toward basic residues. A compositionally biased stretch (basic and acidic residues) spans 1712–1722 (LSRELLDEKGP). Disordered stretches follow at residues 1845–1867 (TKKD…RELL) and 1923–1964 (KGKG…LDEK). A compositionally biased stretch (basic residues) spans 1924–1942 (GKGKKRRGRRSKKERRRGR). Disordered regions lie at residues 2089–2111 (TKKD…RELL) and 2167–2208 (KGKG…LDEK). A compositionally biased stretch (basic residues) spans 2168–2186 (GKGKKRRGRRSKKERRRGR). 2 disordered regions span residues 2333-2355 (TKKD…RELL) and 2411-2452 (KGKG…LDEK). The span at 2412–2430 (GKGKKRRGRRSKKERRRGR) shows a compositional bias: basic residues. Disordered regions lie at residues 2577 to 2599 (TKKD…RELL) and 2655 to 2709 (KGKG…DRSY). Basic residues predominate over residues 2656–2674 (GKGKKRRGRRSKKERRRGR). The segment covering 2688-2698 (LSRELLDEKGP) has biased composition (basic and acidic residues). Disordered regions lie at residues 2821–2843 (TKKD…RELL) and 2899–2953 (KGKG…DRSY). Residues 2900–2918 (GKGKKRRGRRSKKERRRGR) are compositionally biased toward basic residues. A compositionally biased stretch (basic and acidic residues) spans 2932–2942 (LSRELLDEKGP). Disordered regions lie at residues 3065–3087 (TKKD…RELL) and 3143–3197 (KGKG…DRSY). Basic residues predominate over residues 3144-3162 (GKGKKRRGRRSKKERRRGR). The span at 3176 to 3186 (LSRELLDEKGP) shows a compositional bias: basic and acidic residues. Disordered regions lie at residues 3309-3331 (TKKD…RELL) and 3387-3441 (KGKG…DRSY). Residues 3388-3406 (GKGKKRRGRRSKKERRRGR) are compositionally biased toward basic residues. A compositionally biased stretch (basic and acidic residues) spans 3420–3430 (LSRELLDEKGP). 2 disordered regions span residues 3553–3575 (TKKD…RELL) and 3631–3672 (KGKG…LDEK). Positions 3632-3650 (GKGKKRRGRRSKKERRRGR) are enriched in basic residues. 2 disordered regions span residues 3797–3819 (TKKD…RELL) and 3875–3916 (KGKG…LDEK). Positions 3876-3894 (GKGKKRRGRRSKKERRRGR) are enriched in basic residues. 2 disordered regions span residues 4041-4063 (TKKD…RELL) and 4119-4160 (KGKG…LDEK). Positions 4120-4138 (GKGKKRRGRRSKKERRRGR) are enriched in basic residues. Disordered regions lie at residues 4285–4307 (TKKD…RELL), 4361–4404 (EKKG…LDEK), 4453–4474 (RTKK…LSRE), and 4530–4573 (EKKG…LDEK). A compositionally biased stretch (basic residues) spans 4364–4382 (GKGKKRRGRRSKKERRRGR). Residues 4533–4551 (GKGKKRRGRRSKKERRRGR) show a composition bias toward basic residues. Disordered regions lie at residues 4773–4793 (TKKD…LSRE) and 4851–4889 (KGKG…RELL). Basic residues predominate over residues 4852–4870 (GKGKKRRGRRSKKERRRGR). Disordered stretches follow at residues 5017-5037 (TKKD…LSRE) and 5094-5128 (KKGK…CPRL). Basic residues predominate over residues 5096–5114 (GKGKKRRGRRSKKKRRRGR).

The protein belongs to the NBPF family.

It localises to the cytoplasm. In Homo sapiens (Human), this protein is NBPF family member NBPF20.